Consider the following 894-residue polypeptide: Glutamate receptor 3 (894 aa).

An N-terminal signal peptide occupies residues 1–28 (MARQKKMGQNVLRAVFFLVLGLLGHSHG). Topologically, residues 29 to 552 (GFPNTISIGG…GVFSFLDPLA (524 aa)) are extracellular. N-linked (GlcNAc...) asparagine glycans are attached at residues Asn-63, Asn-266, Asn-380, Asn-415, and Asn-422. A disulfide bridge links Cys-91 with Cys-340. Pro-508, Thr-510, and Arg-515 together coordinate L-glutamate. Residues 553-573 (YEIWMCIVFASIGVSVVLFLV) form a helical membrane-spanning segment. The Cytoplasmic segment spans residues 574–602 (SRFSPYEWHLEDNNEEPRDPQSPPDPPNE). Residues 603–618 (FGIFNSLWFSLGAFMQ) constitute an intramembrane region (helical; Pore-forming). An intramembrane segment occupies 619–621 (QGC). Cys-621 carries S-palmitoyl cysteine lipidation. At 622 to 627 (DISPRS) the chain is on the cytoplasmic side. The helical transmembrane segment at 628–648 (LSGRIVGGVWWFFTLIIISSY) threads the bilayer. The Extracellular segment spans residues 649 to 823 (TANLAAFLTV…DKTSALSLSN (175 aa)). L-glutamate is bound by residues Ser-686, Thr-687, and Glu-737. Cys-750 and Cys-805 are disulfide-bonded. The helical transmembrane segment at 824-844 (VAGVFYILVGGLGLAMMVALI) threads the bilayer. Topologically, residues 845–894 (EFCYKSRAESKRMKLTKNTQNFKPAPATNTQNYATYREGYNVYGTESVKI) are cytoplasmic. The S-palmitoyl cysteine moiety is linked to residue Cys-847. 2 positions are modified to phosphotyrosine: Tyr-877 and Tyr-887.

Belongs to the glutamate-gated ion channel (TC 1.A.10.1) family. GRIA3 subfamily. As to quaternary structure, homotetramer or heterotetramer of pore-forming glutamate receptor subunits. Tetramers may be formed by the dimerization of dimers. Interacts with PICK1, GRIP1 and GRIP2. Found in a complex with GRIA1, GRIA2, GRIA4, CNIH2, CNIH3, CACNG2, CACNG3, CACNG4, CACNG5, CACNG7 and CACNG8. Interacts with CACNG5. Found in a complex with GRIA1, GRIA2, GRIA4, DLG4, CACNG8 and CNIH2.

The protein localises to the cell membrane. Its subcellular location is the postsynaptic cell membrane. The protein resides in the postsynaptic density membrane. It carries out the reaction Ca(2+)(in) = Ca(2+)(out). Its function is as follows. Ionotropic glutamate receptor that functions as a ligand-gated cation channel, gated by L-glutamate and glutamatergic agonists such as alpha-amino-3-hydroxy-5-methyl-4-isoxazolepropionic acid (AMPA), quisqualic acid, and kainic acid. L-glutamate acts as an excitatory neurotransmitter at many synapses in the central nervous system and plays an important role in fast excitatory synaptic transmission by inducing long-term potentiation. Binding of the excitatory neurotransmitter L-glutamate induces a conformation change, leading to the opening of the cation channel, and thereby converts the chemical signal to an electrical impulse upon entry of calcium. The receptor then desensitizes rapidly and enters a transient inactive state, characterized by the presence of bound agonist. In the presence of CACNG8, shows resensitization which is characterized by a delayed accumulation of current flux upon continued application of glutamate. This is Glutamate receptor 3 from Macaca fascicularis (Crab-eating macaque).